A 660-amino-acid polypeptide reads, in one-letter code: MKAVIFAYHDMGCQGVQAVLDAGYDIAAIFTHADNPAENTFFGSVSRLAAGLGIPVYAPDNVNHPIWVDRIAELAPDIIFSFYYRNLLSEEILHLAPAGAFNLHGSLLPAYRGRAPLNWVLVNGESETGVTLHRMVKRADAGEIVASQRVAIAQDDVALTLHHKLCQAARQLLNSILPTMKCGDIPSVPQRESDATYYGRRRPEDGLIDWHKPVSTVHNLVRAVAAPWPGAFSYNGSQKFTIWSSRICPDAQGALPGSVISVSPLRVACADGALEIITGQAGDGITVQGSQLAQTLGLVAGARLNRPPATSGKRRIRVLILGVNGFIGNHLTERLLNEENYEVYGMDIGSNAISRFLLHPRFHFVEGDISIHSEWIEYHVKKCDVVLPLVAIATPIEYTRNPLRVFELDFEENLRIIRYCVKYRKRVVFPSTSEVYGMCTDASFDEDKSNLIVGPVNKPRWIYSVSKQLLDRVIWAYGEKEGLRFTLFRPFNWMGPRLDSLNAARIGSSRAITQLILNLVEGTPIKLIDGGQQKRCFTDIRDGIEALFRIIVNDGDRCDGKIINIGNPDNEASIQELATLLLDSFDKHPLRCHFPPFAGFQVVESRSYYGKGYQDVAHRKPSIDNARRCLGWEPSIAMRDTVEETLDFFLRSVDVAERAS.

The tract at residues 1 to 304 is formyltransferase ArnAFT; that stretch reads MKAVIFAYHD…TLGLVAGARL (304 aa). Histidine 104 serves as the catalytic Proton donor; for formyltransferase activity. Residues arginine 114 and 136–140 each bind (6R)-10-formyltetrahydrofolate; that span reads VKRAD. The segment at 314–660 is dehydrogenase ArnADH; that stretch reads RRIRVLILGV…RSVDVAERAS (347 aa). NAD(+) contacts are provided by residues aspartate 347 and 368–369; that span reads DI. UDP-alpha-D-glucuronate-binding positions include alanine 393, tyrosine 398, and 432–433; that span reads TS. The Proton acceptor; for decarboxylase activity role is filled by glutamate 434. UDP-alpha-D-glucuronate contacts are provided by residues arginine 460, asparagine 492, 526–535, and tyrosine 613; that span reads KLIDGGQQKR. Residue arginine 619 is the Proton donor; for decarboxylase activity of the active site.

The protein in the N-terminal section; belongs to the Fmt family. UDP-L-Ara4N formyltransferase subfamily. In the C-terminal section; belongs to the NAD(P)-dependent epimerase/dehydratase family. UDP-glucuronic acid decarboxylase subfamily. Homohexamer, formed by a dimer of trimers.

It carries out the reaction UDP-alpha-D-glucuronate + NAD(+) = UDP-beta-L-threo-pentopyranos-4-ulose + CO2 + NADH. The catalysed reaction is UDP-4-amino-4-deoxy-beta-L-arabinose + (6R)-10-formyltetrahydrofolate = UDP-4-deoxy-4-formamido-beta-L-arabinose + (6S)-5,6,7,8-tetrahydrofolate + H(+). Its pathway is nucleotide-sugar biosynthesis; UDP-4-deoxy-4-formamido-beta-L-arabinose biosynthesis; UDP-4-deoxy-4-formamido-beta-L-arabinose from UDP-alpha-D-glucuronate: step 1/3. It participates in nucleotide-sugar biosynthesis; UDP-4-deoxy-4-formamido-beta-L-arabinose biosynthesis; UDP-4-deoxy-4-formamido-beta-L-arabinose from UDP-alpha-D-glucuronate: step 3/3. It functions in the pathway bacterial outer membrane biogenesis; lipopolysaccharide biosynthesis. Its function is as follows. Bifunctional enzyme that catalyzes the oxidative decarboxylation of UDP-glucuronic acid (UDP-GlcUA) to UDP-4-keto-arabinose (UDP-Ara4O) and the addition of a formyl group to UDP-4-amino-4-deoxy-L-arabinose (UDP-L-Ara4N) to form UDP-L-4-formamido-arabinose (UDP-L-Ara4FN). The modified arabinose is attached to lipid A and is required for resistance to polymyxin and cationic antimicrobial peptides. This chain is Bifunctional polymyxin resistance protein ArnA, found in Salmonella paratyphi B (strain ATCC BAA-1250 / SPB7).